The primary structure comprises 354 residues: Putrescine/cadaverine-binding protein (354 aa).

Residues 1 to 20 (MMKKLLLVATLMAGAAQATA) form the signal peptide.

It belongs to the bacterial solute-binding protein 1 family.

It localises to the periplasm. Its function is as follows. Binds putrescine and cadaverine. In Pseudomonas aeruginosa (strain ATCC 15692 / DSM 22644 / CIP 104116 / JCM 14847 / LMG 12228 / 1C / PRS 101 / PAO1), this protein is Putrescine/cadaverine-binding protein.